The sequence spans 269 residues: UPF0162 protein YchA (269 aa).

This sequence belongs to the UPF0162 family.

This is UPF0162 protein YchA (ychA) from Escherichia coli O157:H7.